The primary structure comprises 1463 residues: MAKNKKQNGKAKTPPVVAAAAGEQKETIGNGHAEQNGLNGHASSEESDPAAAGPNESADDKSAGVAGGGETEQQQQQQEDDVMRLMQETGFTVQVLSPGVEPLSIQVSSMELVQEIHQLLMDREDTCHRTCFSLQLDGRTLDNFAELKNIDGLQEGSVIRVVEEPYTMREARIHVRHVRDLLKSLDPADAYNGVDCSSLTFLHTITMGDIMEKKKTRQESVDCTPPDFIMPGARERPLLPLQPGTGKKGTPQPLKVLTTSAWNPPPGPRKLHGDLMYLYVVTMEDKRLHISACSRGFYVNQSTDDAFNPQPANPSYLSHSLIDLLSQISATFRRCFAQMQKKRTQRHPFERVATPYQVYTWTAPALEHTIDAIRAEDTFSSKLGYEEHIPGQTRDWNEELQTTRELPRATLPERLLRERAIFKVHSDFVTAATRGAMAVIDGNVMPINPGEDAKTQMFIWNNIFFSLGFDVRDHYKELGGDAAAFVAPRNDLHGVRVYSAVDVEGLYTLGTVVIDYRGYRVTAQSIIPGILEREQDQSVVYGSIDFGKTVLSHPKYLELLNAAGKHLKILPHSVYNDKEEAIELCSSVECKGIIGNDGRHYILDLLRTFPPDVNFLALPAEEEAVGKESRAMGFPIEHRHKLCCLRQELLEAFVENRYLMFMKHAAVQLQQCVKMKQEQKAAAAQKTEEGGKQAAIEAAAPAEGDKTPAKDAKDGKEAGKDANDGKEEGSTTKEAAAAAAAARSVPKPDSEDAKKLVESLISSDQKNESMEVVKRACEAVGSLKEYEFNIRFNPDVYSPGIRHVDEEPNAAGSLRRQKQLVKDAAEFLVKHQIPSFVHECLDHTSAPMDGVTLTELLHNRGINVRYLGKVVDQLAKIKQLEYLHTIAVSELIVRAAKHLFTAYLQQTDVMSMAAAISHFLNCFLTVSTGGYQPVANGTGADGDGQLADEFGPKAGGKKQNKQSKRGGGGGGGKGAAGGGRKATFSVPSSDNCEWTALTSKTLWAQIRQELKAYWDFELTVEQPAKEGKESKAAVIDSIEPLIGAFKLQKISLLRSFCLKTGVQILLQEYAFEQRNRPAFTDADIVNVFPVVKHINPRASDAYNFYTTGQTKIQQGYLQDGYGLISEALNLLNNVYGAMHPENAQCLRMLARLSYIMGDPQEALAIQQRAVLMSERVNGVDHPYTISEYGHLALYCFANSQITTALKLLYRARYLATIVCGENHPDIALMDSNISLILHAVGEYELSLRFLEHALALNIRYYGEKSLKVAVSYHLVARTQSCMGDFRSALVNEKETYAIYKQQLGENHEKTQESSECLRHLTQQAVVLQKKMNYANGKLLSTGLPPIHIQPPSMGSVLDMLNAINGIIFVQISSKEIANFKNEIEKRQKEAGAQSQQPGGGPVQANQEEVDQMLMETMQKTAAGIPFEEQDGEKKDGAAEAASHTAGGAAANTAAPAVSPRRKS.

The disordered stretch occupies residues 1–79 (MAKNKKQNGK…ETEQQQQQQE (79 aa)). The segment covering 10-22 (KAKTPPVVAAAAG) has biased composition (low complexity). The 243-residue stretch at 374 to 616 (RAEDTFSSKL…RTFPPDVNFL (243 aa)) folds into the Clu domain. Disordered stretches follow at residues 684-753 (AQKT…SEDA), 942-988 (GDGQ…SVPS), and 1387-1463 (QKEA…RRKS). Residues 692–702 (KQAAIEAAAPA) are compositionally biased toward low complexity. Positions 703–731 (EGDKTPAKDAKDGKEAGKDANDGKEEGST) are enriched in basic and acidic residues. Positions 955 to 964 (GGKKQNKQSK) are enriched in basic residues. Positions 965–980 (RGGGGGGGKGAAGGGR) are enriched in gly residues. Residues 1438 to 1456 (AEAASHTAGGAAANTAAPA) show a composition bias toward low complexity.

The protein belongs to the CLU family.

Its subcellular location is the cytoplasm. Its function is as follows. mRNA-binding protein involved in proper cytoplasmic distribution of mitochondria. The polypeptide is Clustered mitochondria protein homolog (Anopheles gambiae (African malaria mosquito)).